The sequence spans 269 residues: Mitochondrial distribution and morphology protein 12 (269 aa).

One can recognise an SMP-LTD domain in the interval 1–269 (MSLEVNWEQI…WPNWIEFQGV (269 aa)). The interval 72–119 (ERAGTGEGDEDDGRVAPTSTPMKHQTSGSSDQTDASNPISPSTSHDHE) is disordered. A compositionally biased stretch (polar residues) spans 88-114 (PTSTPMKHQTSGSSDQTDASNPISPST).

It belongs to the MDM12 family. Component of the ER-mitochondria encounter structure (ERMES) or MDM complex, composed of MMM1, MDM10, MDM12 and MDM34. An MMM1 homodimer associates with one molecule of MDM12 on each side in a pairwise head-to-tail manner, and the SMP-LTD domains of MMM1 and MDM12 generate a continuous hydrophobic tunnel for phospholipid trafficking.

It is found in the mitochondrion outer membrane. The protein resides in the endoplasmic reticulum membrane. Component of the ERMES/MDM complex, which serves as a molecular tether to connect the endoplasmic reticulum (ER) and mitochondria. Components of this complex are involved in the control of mitochondrial shape and protein biogenesis, and function in nonvesicular lipid trafficking between the ER and mitochondria. MDM12 is required for the interaction of the ER-resident membrane protein MMM1 and the outer mitochondrial membrane-resident beta-barrel protein MDM10. The MDM12-MMM1 subcomplex functions in the major beta-barrel assembly pathway that is responsible for biogenesis of all mitochondrial outer membrane beta-barrel proteins, and acts in a late step after the SAM complex. The MDM10-MDM12-MMM1 subcomplex further acts in the TOM40-specific pathway after the action of the MDM12-MMM1 complex. Essential for establishing and maintaining the structure of mitochondria and maintenance of mtDNA nucleoids. This Komagataella phaffii (strain GS115 / ATCC 20864) (Yeast) protein is Mitochondrial distribution and morphology protein 12.